The sequence spans 533 residues: Beta-1,2-xylosyltransferase RCN11 (533 aa).

The Cytoplasmic portion of the chain corresponds to 1–23 (MMPVRTYHHHHHHNNSNNHRLRR). Residues 24 to 44 (IIPRVLLAVFAIYAVSFAAYL) form a helical; Signal-anchor for type II membrane protein membrane-spanning segment. Residues 45–533 (LRHQSPHPHP…LSNILKGFGC (489 aa)) lie on the Lumenal side of the membrane. Positions 51-78 (HPHPHPAADPERDAVDAAGGGGGGGAVD) are disordered. A compositionally biased stretch (basic and acidic residues) spans 56-65 (PAADPERDAV). Residues Asn-307 and Asn-313 are each glycosylated (N-linked (GlcNAc...) asparagine).

Belongs to the glycosyltransferase 61 family. In terms of tissue distribution, expressed at the base of the crown roots and in the basal region of the shoot, which contains the shoot and axillary meristems.

The protein localises to the golgi apparatus membrane. The protein operates within glycan metabolism. Functionally, glycosyltransferase involved in the xylosylation of N-glycans. Possesses beta-1,2-xylosyltransferase activity, transferring xylose from UDP-xylose to the core beta-linked mannose of N-glycans. Beta-1,2-linked xylose residues on N-glycans are critical for seed germination and plant development and growth under conditions of abiotic stress. This Oryza sativa subsp. japonica (Rice) protein is Beta-1,2-xylosyltransferase RCN11.